Consider the following 426-residue polypeptide: Glutamate-1-semialdehyde 2,1-aminomutase (426 aa).

N6-(pyridoxal phosphate)lysine is present on lysine 265.

It belongs to the class-III pyridoxal-phosphate-dependent aminotransferase family. HemL subfamily. In terms of assembly, homodimer. Requires pyridoxal 5'-phosphate as cofactor.

It localises to the cytoplasm. It carries out the reaction (S)-4-amino-5-oxopentanoate = 5-aminolevulinate. It functions in the pathway porphyrin-containing compound metabolism; protoporphyrin-IX biosynthesis; 5-aminolevulinate from L-glutamyl-tRNA(Glu): step 2/2. In Actinobacillus pleuropneumoniae serotype 5b (strain L20), this protein is Glutamate-1-semialdehyde 2,1-aminomutase.